We begin with the raw amino-acid sequence, 318 residues long: MAPPNGTTNGETEVATQGSYTAVSTGRKTTMHRLIEEHGSVLMPGVQDALSAAVVEKTGFHAAFVSGYSVSAAMLGLPDFGLLTTTEVVEATRRITAAAPNLCVVVDGDTGGGGPLNVQRFIRELISAGAKGVFLEDQVWPKKCGHMRGKAVVPAEEHALKIAAAREAIGDSDFFLVARTDARAPHGLEEGIRRANLYKEAGADATFVEAPANVDELKEVSAKTKGLRIANMIEGGKTPLHTPEEFKEMGFHLIAHSLTAVYATARALVNIMKILKEKGTTRDDLDQMATFSEFNELISLESWYEMESKFKNFTPKAT.

Residues 1–3 (MAP) constitute a propeptide, removed in mature form. The disordered stretch occupies residues 1 to 24 (MAPPNGTTNGETEVATQGSYTAVS). Positions 107, 109, and 142 each coordinate Mg(2+).

This sequence belongs to the isocitrate lyase/PEP mutase superfamily. As to quaternary structure, homodimer and homotetramer formed by a dimer of homodimer. Requires Mg(2+) as cofactor. It depends on Mn(2+) as a cofactor. Fe(2+) is required as a cofactor. The cofactor is Co(2+). In terms of tissue distribution, accumulates in senescing flower petals.

The catalysed reaction is oxaloacetate + H2O = oxalate + acetate + H(+). Its function is as follows. Catalyzes cleavage of the C(2)-C(3) bond in oxaloacetate and in (2R)-alkyl malate derivatives to form oxalate and acetate, and alkyl carboxylates and R-ketocarboxylates, respectively. The polypeptide is Petal death protein (Dianthus caryophyllus (Carnation)).